The chain runs to 231 residues: Flagellar L-ring protein (231 aa).

A signal peptide spans 1 to 18 (MNRLLSLFALGGAVLLAG). Residue cysteine 19 is the site of N-palmitoyl cysteine attachment. Cysteine 19 carries the S-diacylglycerol cysteine lipid modification.

This sequence belongs to the FlgH family. As to quaternary structure, the basal body constitutes a major portion of the flagellar organelle and consists of four rings (L,P,S, and M) mounted on a central rod.

The protein localises to the cell outer membrane. It is found in the bacterial flagellum basal body. Assembles around the rod to form the L-ring and probably protects the motor/basal body from shearing forces during rotation. The sequence is that of Flagellar L-ring protein from Pseudomonas putida (strain W619).